The sequence spans 234 residues: MPTQDSAAKQADDGFQLVQKKSRKRKMTMDMDDADPKAGAVVYPPAKQEKLEGKGELRRIAVPAHRYTPLKDNWLKIFTPVVEHLHLQIRFNLKSRCVEIRTCKETEEPSALQKAADFVRAFTLGFEVDDALALVRLDELFLESFDVQDVKPLKGDHLARCIGRLAGKGGRTKFTIENVTKTRIVLADSKVHILGSYQNIRAARTALCNLVLGKPPSKVYGTMRQLASRIGERF.

A disordered region spans residues 1-39; sequence MPTQDSAAKQADDGFQLVQKKSRKRKMTMDMDDADPKAG. In terms of domain architecture, KH spans 158–207; it reads LARCIGRLAGKGGRTKFTIENVTKTRIVLADSKVHILGSYQNIRAARTAL.

The protein belongs to the PNO1 family.

Its subcellular location is the nucleus. The protein resides in the nucleolus. The polypeptide is RNA-binding protein pno1 (Ixodes scapularis (Black-legged tick)).